Reading from the N-terminus, the 637-residue chain is MKKLQEAHLRKPVTPDLLMTPSDQGDVDLDVDFAADRGNWTGKLDFLLSCIGYCVGLGNVWRFPYRAYTNGGGAFLVPYFLMLAICGIPLFFLELSLGQFSSLGPLAVWKISPLFKGAGAAMLLIVGLVAIYYNMIIAYVLFYLFASLTSNLPWEHCGNWWNTERCLEHRGPKDGNGALPLNLSSTVSPSEEYWSRYVLHIQGSQGIGRPGEIRWNLCLCLLLAWVIVFLCILKGVKSSGKVVYFTATFPYLILLMLLVRGVTLPGAWKGIQFYLTPQFHHLLSSKVWIEAALQIFYSLGVGFGGLLTFASYNTFHQNIYRDTFIVTLGNAITSILAGFAIFSVLGYMSQELGVPVDQVAKAGPGLAFVIYPQAMTMLPLSPFWSFLFFFMLLTLGLDSQFAFLETIVTAVTDEFPYYLRPKKAVFSGLICVAMYLMGLILTTDGGMYWLVLLDDYSASFGLMVVVITTCLAVTRVYGIQRFCRDIHMMLGFKPGLYFRACWLFLSPATLLALLVYSIVKYQPSEYGSYRFPAWAELLGILMGLLSCLMIPAGMLVAVLREEGSLWERLQQASRPAIDWGPSLEENRTGMYVATLAGSQSPKPLMVHMRKYGGITSFENTAIEVDREIAEEEEESMM.

Residues 1-45 lie on the Cytoplasmic side of the membrane; the sequence is MKKLQEAHLRKPVTPDLLMTPSDQGDVDLDVDFAADRGNWTGKLD. Residue Thr20 is modified to Phosphothreonine. The residue at position 22 (Ser22) is a Phosphoserine. A run of 3 helical transmembrane segments spans residues 46–66, 74–93, and 117–137; these read FLLS…FPYR, AFLV…LFFL, and GAGA…NMII. Residues 138 to 214 are Extracellular-facing; the sequence is AYVLFYLFAS…QGIGRPGEIR (77 aa). Asn182 carries N-linked (GlcNAc...) asparagine glycosylation. 9 helical membrane passes run 215–233, 242–259, 295–312, 324–345, 378–397, 425–443, 459–479, 500–519, and 538–556; these read WNLC…LCIL, VVYF…MLLV, IFYS…FASY, FIVT…FSVL, LPLS…TLGL, VFSG…ILTT, SFGL…VYGI, ACWL…YSIV, and LGIL…GMLV. Residues 557–637 lie on the Cytoplasmic side of the membrane; sequence AVLREEGSLW…IAEEEEESMM (81 aa). Residues Ser573 and Ser582 each carry the phosphoserine modification. Thr588 carries the phosphothreonine modification. Tyr591 is modified (phosphotyrosine). Phosphoserine is present on residues Ser598 and Ser600.

It belongs to the sodium:neurotransmitter symporter (SNF) (TC 2.A.22) family. SLC6A7 subfamily. As to expression, expressed in subpopulations of putative glutamatergic pathways of rat brain.

It localises to the synaptic cell membrane. It catalyses the reaction L-proline(out) + chloride(out) + 2 Na(+)(out) = L-proline(in) + chloride(in) + 2 Na(+)(in). The catalysed reaction is L-pipecolate(out) + chloride(out) + 2 Na(+)(out) = L-pipecolate(in) + chloride(in) + 2 Na(+)(in). In terms of biological role, brain specific sodium (and chloride)-dependent proline transporter. Terminates the action of proline by its high affinity sodium-dependent reuptake into presynaptic terminals. The sequence is that of Sodium-dependent proline transporter (Slc6a7) from Rattus norvegicus (Rat).